The chain runs to 343 residues: uncharacterized protein (343 aa).

2 disordered regions span residues 1 to 27 (MIREWENGCPKIGKQRARDSRAQERMT) and 205 to 247 (SGGL…SKRQ). Over residues 16–27 (RARDSRAQERMT) the composition is skewed to basic and acidic residues. The segment covering 219–228 (GQDDGNTDDG) has biased composition (acidic residues). Over residues 229–247 (NDVHQKGRGEVESKTSKRQ) the composition is skewed to basic and acidic residues.

Functionally, dispensable for normal development and fertility. This is an uncharacterized protein from Bos taurus (Bovine).